Here is a 348-residue protein sequence, read N- to C-terminus: Rhodopsin (348 aa).

Met-1 is modified (N-acetylmethionine). At 1 to 36 (MNGTEGPNFYVPFSNATGVVRSPFEYPQYYLAEPWQ) the chain is on the extracellular side. 2 N-linked (GlcNAc...) asparagine glycosylation sites follow: Asn-2 and Asn-15. A helical membrane pass occupies residues 37-61 (FSMLAAYMFLLIVLGFPINFLTLYV). The Cytoplasmic portion of the chain corresponds to 62–73 (TVQHKKLRTPLN). The helical transmembrane segment at 74–96 (YILLNLAVADLFMVFGGFTTTLY) threads the bilayer. The Extracellular segment spans residues 97-110 (TSLHGYFVFGPTGC). Residues Cys-110 and Cys-187 are joined by a disulfide bond. Residues 111–133 (NAEGFFATLGGEIALWSLVVLAI) form a helical membrane-spanning segment. Positions 134–136 (ERY) match the 'Ionic lock' involved in activated form stabilization motif. The Cytoplasmic segment spans residues 134-152 (ERYVVVCKPMSNFRFGENH). Residues 153 to 173 (AIMGVAFTWVMALACAAPPLF) form a helical membrane-spanning segment. At 174–202 (GWSRYIPEGLQCSCGIDYYTLKPEVNNES) the chain is on the extracellular side. Glu-201 contributes to the Zn(2+) binding site. Residues 203 to 224 (FVIYMFVVHFTIPMIVIFFCYG) form a helical membrane-spanning segment. The Cytoplasmic portion of the chain corresponds to 225-252 (QLVFTVKEARAQQQESATTQKAEKEVTR). The helical transmembrane segment at 253–274 (MVIIMVIAFLICWVPYASVAFY) threads the bilayer. The Extracellular portion of the chain corresponds to 275–286 (IFTHQGSNFGPI). Position 279 (Gln-279) interacts with Zn(2+). Residues 287 to 308 (FMTIPAFFAKSASIYNPVIYIM) form a helical membrane-spanning segment. Lys-296 carries the N6-(retinylidene)lysine modification. The Cytoplasmic portion of the chain corresponds to 309–348 (MNKQFRNCMLTTICCGKNPLGDDEASATVSKTETSQVAPA). 2 S-palmitoyl cysteine lipidation sites follow: Cys-322 and Cys-323. An interaction with SAG region spans residues 330 to 348 (DDEASATVSKTETSQVAPA). A Phosphoserine modification is found at Ser-334. Phosphothreonine is present on Thr-336. Position 338 is a phosphoserine (Ser-338). Residues Thr-340 and Thr-342 each carry the phosphothreonine modification. Residue Ser-343 is modified to Phosphoserine.

Belongs to the G-protein coupled receptor 1 family. Opsin subfamily. As to quaternary structure, homodimer. May form a complex composed of RHO, GRK1 and RCVRN in a Ca(2+)-dependent manner; RCVRN prevents the interaction between GRK1 and RHO. Interacts with GRK1. Interacts (phosphorylated form) with SAG. Interacts with GNAT1. Interacts with GNAT3. SAG and G-proteins compete for a common binding site. Interacts with PRCD; the interaction promotes PRCD stability. Forms a complex with ASAP1 and ARF4. Forms a complex with ASAP1, RAB11A, Rabin8/RAB3IP, ARF4 and RAB11FIP3; the complex regulates Golgi-to-cilia rhodopsin/RHO transport in photoreceptors. In terms of processing, phosphorylated on some or all of the serine and threonine residues present in the C-terminal region. Contains one covalently linked retinal chromophore. Upon light absorption, the covalently bound 11-cis-retinal is converted to all-trans-retinal. After hydrolysis of the Schiff base and release of the covalently bound all-trans-retinal, active rhodopsin is regenerated by binding of a fresh molecule of 11-cis-retinal.

The protein localises to the membrane. Its subcellular location is the cell projection. The protein resides in the cilium. It is found in the photoreceptor outer segment. Photoreceptor required for image-forming vision at low light intensity. Required for photoreceptor cell viability after birth. Light-induced isomerization of 11-cis to all-trans retinal triggers a conformational change that activates signaling via G-proteins. Subsequent receptor phosphorylation mediates displacement of the bound G-protein alpha subunit by the arrestin SAG and terminates signaling. This is Rhodopsin (RHO) from Macaca fascicularis (Crab-eating macaque).